Reading from the N-terminus, the 259-residue chain is Ribonuclease HII (259 aa).

The RNase H type-2 domain occupies 70 to 258 (TLIAGIDEVG…VKSLVLGKKE (189 aa)). Residues D76, E77, and D168 each coordinate a divalent metal cation.

This sequence belongs to the RNase HII family. Mn(2+) serves as cofactor. It depends on Mg(2+) as a cofactor.

The protein resides in the cytoplasm. The catalysed reaction is Endonucleolytic cleavage to 5'-phosphomonoester.. Functionally, endonuclease that specifically degrades the RNA of RNA-DNA hybrids. The polypeptide is Ribonuclease HII (Streptococcus pneumoniae serotype 4 (strain ATCC BAA-334 / TIGR4)).